We begin with the raw amino-acid sequence, 355 residues long: MWKEKVRDNILGEVIDWKALIDSLKKERFTGYIKVESWDETDYVILAEGSVKKIVRHKDNKKTFLDTSNYTPSSESKISVYKSSPLTTAHICKDLNFFEYQTLSLSGYGEEIFHSELNLVNPEKLETFFQKVNLNGYAVIYTYTSIYCNVFLLQGHLVGINGGNTWDSEVPSQKDLWQGKVFLSAYFIEPDEVLLLISLKRGFKEKNELNGNGFFVNGNYVGFVENGNIKKGLLILPEEIVETQEVKGEKFLEVNLIENPERLEISFKDLIPKEEKKIKPDVPLKVREIFLDYIGPVGKILWDKVLQELDISPEEFTHPTFRMFINRLAQEIPEEDLSKEFLNKAWEVLDESTST.

This is an uncharacterized protein from Aquifex aeolicus (strain VF5).